The following is an 81-amino-acid chain: MSSGCLLLLLGLLTLWAELTPVSGRPRLCELPAESGLCNAYIPSFYYNPHSHKCQKFMYGGCGGNANNFKTIDECHRTCVG.

The N-terminal stretch at 1–24 (MSSGCLLLLLGLLTLWAELTPVSG) is a signal peptide. The BPTI/Kunitz inhibitor domain maps to 29-79 (CELPAESGLCNAYIPSFYYNPHSHKCQKFMYGGCGGNANNFKTIDECHRTC). Disulfide bonds link cysteine 29–cysteine 79, cysteine 38–cysteine 62, and cysteine 54–cysteine 75.

As to expression, expressed by the venom gland.

It localises to the secreted. Functionally, snake venom serine protease inhibitor. The polypeptide is Kunitz-type serine protease inhibitor spermatin (Walterinnesia aegyptia (Desert black snake)).